The following is a 484-amino-acid chain: Cysteine--tRNA ligase (484 aa).

Cys27 is a Zn(2+) binding site. The 'HIGH' region motif lies at 29–39 (PTTYNYIHLGN). Zn(2+) contacts are provided by Cys207, His232, and Glu236. A 'KMSKS' region motif is present at residues 264 to 268 (KMSKS). Residue Lys267 coordinates ATP.

The protein belongs to the class-I aminoacyl-tRNA synthetase family. In terms of assembly, monomer. Requires Zn(2+) as cofactor.

Its subcellular location is the cytoplasm. It carries out the reaction tRNA(Cys) + L-cysteine + ATP = L-cysteinyl-tRNA(Cys) + AMP + diphosphate. The protein is Cysteine--tRNA ligase of Pelotomaculum thermopropionicum (strain DSM 13744 / JCM 10971 / SI).